Reading from the N-terminus, the 303-residue chain is Recombination-associated protein RdgC (303 aa).

It belongs to the RdgC family.

Its subcellular location is the cytoplasm. The protein localises to the nucleoid. May be involved in recombination. The sequence is that of Recombination-associated protein RdgC from Salmonella agona (strain SL483).